The primary structure comprises 679 residues: MPSEVTPKVPERPSRRKTSELFPLSGSESGDIKANSEPPTPAGTPNVPTRRPILKAKTMTSFESGMDQESLPKVPLQRPVRRSTTEELNNVMNNTSKELEEIESLISKHNIHSVSRKKSPTSVQEGKAAAIHQNGQRSASDNKTSTNPSPLEKNEHKGDEGNESAISPSNSVNKSNNEVTEHSDSEDLTEKQKVHAALDNEAGDGSHFEEKLIPGDMKVPVDVSKDVEEGSLNALPPSGITESDDKAEKFTKHPESSLEELQKHQEQQEEKIFQNPTDEESTTSLNEKQEGKDNMEVNSQPQGPSDTETVIAATSSNVPSQIASEEENDVPVIPRSRPKKDFEAHVQKEELPNTQEKLVSEECDSTLISTEEESKIPKIPSERPKRRAPPPVPKKPSSRIAAFQEMLQKQQQQDLHNNGNSSATTASADIAKKHTDSSITSDTTKADFTSKLNGLFALPGMVNPGQLPPSLEKKLSSPDTESKLGTQDQSQAKTGPLGGTRRGRGPRGRKLPSKVASVEKIEEDDNTNKIEIFNNWNVSSSFSKEKILMDTTPGEQAERALDEKSKSIPEEQREQSPNKMEAALCPFELDEQEKLPANAESDPLSQLPQTNAVGNRKAISEESLSPSEAIANRDQNDTTEIQEQQMEDQMEVDMERELSGGYEDVDSALHSEEASFHSL.

The interval 1–95 (MPSEVTPKVP…EELNNVMNNT (95 aa)) is disordered. Positions 9–19 (VPERPSRRKTS) are enriched in basic and acidic residues. At Thr-18 the chain carries Phosphothreonine. Ser-36 is modified (phosphoserine). Thr-58 carries the phosphothreonine modification. Ser-70 is subject to Phosphoserine. Position 85 is a phosphothreonine (Thr-85). Positions 86–95 (EELNNVMNNT) are enriched in polar residues. Ser-104 carries the post-translational modification Phosphoserine. Disordered stretches follow at residues 107–522 (SKHN…EKIE) and 548–679 (LMDT…FHSL). A compositionally biased stretch (basic residues) spans 109–119 (HNIHSVSRKKS). 2 stretches are compositionally biased toward polar residues: residues 133–149 (QNGQRSASDNKTSTNPS) and 164–178 (SAISPSNSVNKSNNE). Positions 179-213 (VTEHSDSEDLTEKQKVHAALDNEAGDGSHFEEKLI) are enriched in basic and acidic residues. Residues Ser-183, Ser-206, and Ser-231 each carry the phosphoserine modification. Residues 243–272 (SDDKAEKFTKHPESSLEELQKHQEQQEEKI) are compositionally biased toward basic and acidic residues. Thr-277 carries the post-translational modification Phosphothreonine. The residue at position 284 (Ser-284) is a Phosphoserine. Residues 296 to 323 (EVNSQPQGPSDTETVIAATSSNVPSQIA) show a composition bias toward polar residues. Ser-324 is modified (phosphoserine). Composition is skewed to basic and acidic residues over residues 339-351 (KKDFEAHVQKEEL) and 372-383 (EESKIPKIPSER). The interaction with SH3 domain of ABP1 stretch occupies residues 383–396 (RPKRRAPPPVPKKP). Composition is skewed to polar residues over residues 414 to 427 (DLHNNGNSSATTAS) and 437 to 452 (SSITSDTTKADFTSKL). Residues 471-482 (LEKKLSSPDTES) are compositionally biased toward basic and acidic residues. Residues 483 to 492 (KLGTQDQSQA) are compositionally biased toward polar residues. Over residues 501 to 512 (RRGRGPRGRKLP) the composition is skewed to basic residues. Thr-552 is subject to Phosphothreonine. Residues 556–576 (QAERALDEKSKSIPEEQREQS) show a composition bias toward basic and acidic residues. Ser-576 is subject to Phosphoserine. The segment covering 603-613 (PLSQLPQTNAV) has biased composition (polar residues). Residues Ser-620, Ser-623, Ser-625, Ser-627, Ser-667, Ser-671, Ser-675, and Ser-678 each carry the phosphoserine modification. Basic and acidic residues predominate over residues 667–679 (SALHSEEASFHSL).

It belongs to the AIM21 family. As to quaternary structure, interacts with ribosomes. Interacts with ABP1.

Its subcellular location is the cytoplasm. It is found in the cytoskeleton. The protein resides in the actin patch. Its function is as follows. Involved in mitochondrial migration along actin filaments. The protein is Altered inheritance of mitochondria protein 21 (AIM21) of Saccharomyces cerevisiae (strain YJM789) (Baker's yeast).